A 363-amino-acid chain; its full sequence is NAD(P)H-quinone oxidoreductase subunit 1, chloroplastic (363 aa).

8 helical membrane passes run 27–47, 93–113, 124–144, 162–182, 200–220, 250–270, 303–323, and 343–363; these read LIPILIILLGATLGVLVIVWL, WLFSVGPALVVVPVFLSYLVV, LGVGILFWIALSSIAPLGLLM, AAQAISYEIPLALCVLSVALL, ILGWNIWRQPIGFIAFLIASL, FGLFYVGSYLNLLVSALFVSV, ATLGIAITLGKAYLFLFLSIL, and FLLPVSLGNLLLTASLQLALL.

It belongs to the complex I subunit 1 family. In terms of assembly, NDH is composed of at least 16 different subunits, 5 of which are encoded in the nucleus.

Its subcellular location is the plastid. The protein resides in the chloroplast thylakoid membrane. It catalyses the reaction a plastoquinone + NADH + (n+1) H(+)(in) = a plastoquinol + NAD(+) + n H(+)(out). The enzyme catalyses a plastoquinone + NADPH + (n+1) H(+)(in) = a plastoquinol + NADP(+) + n H(+)(out). NDH shuttles electrons from NAD(P)H:plastoquinone, via FMN and iron-sulfur (Fe-S) centers, to quinones in the photosynthetic chain and possibly in a chloroplast respiratory chain. The immediate electron acceptor for the enzyme in this species is believed to be plastoquinone. Couples the redox reaction to proton translocation, and thus conserves the redox energy in a proton gradient. This chain is NAD(P)H-quinone oxidoreductase subunit 1, chloroplastic, found in Chaetosphaeridium globosum (Charophycean green alga).